The following is a 403-amino-acid chain: Phosphoglycerate kinase (403 aa).

Residues 21–23, Arg-36, 59–62, Arg-119, and Arg-154 each bind substrate; these read DFN and HLGR. Residues Lys-207, Gly-299, Glu-330, and 357 to 360 contribute to the ATP site; that span reads GGDA.

It belongs to the phosphoglycerate kinase family. In terms of assembly, monomer.

The protein resides in the cytoplasm. It catalyses the reaction (2R)-3-phosphoglycerate + ATP = (2R)-3-phospho-glyceroyl phosphate + ADP. The protein operates within carbohydrate degradation; glycolysis; pyruvate from D-glyceraldehyde 3-phosphate: step 2/5. This Chlamydia trachomatis serovar A (strain ATCC VR-571B / DSM 19440 / HAR-13) protein is Phosphoglycerate kinase.